The chain runs to 124 residues: Small ribosomal subunit protein uS12 (124 aa).

Aspartate 89 carries the 3-methylthioaspartic acid modification. Positions 105 to 124 are disordered; sequence QGVKNRGQARSRYGAKKEKK. Over residues 111–124 the composition is skewed to basic residues; that stretch reads GQARSRYGAKKEKK.

Belongs to the universal ribosomal protein uS12 family. Part of the 30S ribosomal subunit. Contacts proteins S8 and S17. May interact with IF1 in the 30S initiation complex.

Functionally, with S4 and S5 plays an important role in translational accuracy. Interacts with and stabilizes bases of the 16S rRNA that are involved in tRNA selection in the A site and with the mRNA backbone. Located at the interface of the 30S and 50S subunits, it traverses the body of the 30S subunit contacting proteins on the other side and probably holding the rRNA structure together. The combined cluster of proteins S8, S12 and S17 appears to hold together the shoulder and platform of the 30S subunit. This chain is Small ribosomal subunit protein uS12, found in Micrococcus luteus (Micrococcus lysodeikticus).